The following is a 615-amino-acid chain: MRLFLLALLATLAVTQALVKEEIQAKEYLENLNKELAKRTNVETEAAWAYGSNITDENEKKKNEISAELAKFMKEVASDTTKFQWRSYQSEDLKRQFKALTKLGYAALPEDDYAELLDTLSAMESNFAKVKVCDYKDSTKCDLALDPEIEEVISKSRDHEELAYYWREFYDKAGTAVRSQFERYVELNTKAAKLNNFTSGAEAWLDEYEDDTFEQQLEDIFADIRPLYQQIHGYVRFRLRKHYGDAVVSETGPIPMHLLGNMWAQQWSEIADIVSPFPEKPLVDVSAEMEKQGYTPLKMFQMGDDFFTSMNLTKLPQDFWDKSIIEKPTDGRDLVCHASAWDFYLTDDVRIKQCTRVTQDQLFTVHHELGHIQYFLQYQHQPFVYRTGANPGFHEAVGDVLSLSVSTPKHLEKIGLLKDYVRDDEARINQLFLTALDKIVFLPFAFTMDKYRWSLFRGEVDKANWNCAFWKLRDEYSGIEPPVVRSEKDFDAPAKYHISADVEYLRYLVSFIIQFQFYKSACIKAGQYDPDNVELPLDNCDIYGSAAAGAAFHNMLSMGASKPWPDALEAFNGERIMSGKAIAEYFEPLRVWLEAENIKNNVHIGWTTSNKCVSS.

Residues 1–17 (MRLFLLALLATLAVTQA) form the signal peptide. One can recognise a Peptidase M2 domain in the interval 19–607 (VKEEIQAKEY…IKNNVHIGWT (589 aa)). An N-linked (GlcNAc...) asparagine glycan is attached at Asn53. A disulfide bridge connects residues Cys133 and Cys141. Asn196 and Asn311 each carry an N-linked (GlcNAc...) asparagine glycan. Cys336 and Cys354 are oxidised to a cystine. Residue His367 coordinates Zn(2+). The Proton acceptor role is filled by Glu368. Zn(2+) contacts are provided by His371 and Glu395. The active-site Proton donor is His497. Cys522 and Cys540 are oxidised to a cystine.

It belongs to the peptidase M2 family. It depends on Zn(2+) as a cofactor. Post-translationally, glycosylated. In terms of tissue distribution, expressed in vesicular structures in spermatocytes and early spermatids (at protein level).

It is found in the secreted. Its subcellular location is the extracellular space. The catalysed reaction is Release of a C-terminal dipeptide, oligopeptide-|-Xaa-Yaa, when Xaa is not Pro, and Yaa is neither Asp nor Glu. Thus, conversion of angiotensin I to angiotensin II, with increase in vasoconstrictor activity, but no action on angiotensin II.. Inhibited by captopril and, to a lesser extent, by lisinopril, trandolaprilat, fosinoprilat and enalaprilat. Functionally, may be involved in the specific maturation or degradation of a number of bioactive peptides. May play a role in the contractions of the heart, gut and testes, and in spermatid differentiation. This Drosophila melanogaster (Fruit fly) protein is Angiotensin-converting enzyme (Ance).